Consider the following 432-residue polypeptide: Enolase (432 aa).

Residue Q163 participates in (2R)-2-phosphoglycerate binding. The Proton donor role is filled by E205. 3 residues coordinate Mg(2+): D242, E288, and D315. Positions 340, 369, 370, and 391 each coordinate (2R)-2-phosphoglycerate. K340 functions as the Proton acceptor in the catalytic mechanism.

Belongs to the enolase family. Mg(2+) is required as a cofactor.

It is found in the cytoplasm. Its subcellular location is the secreted. It localises to the cell surface. The enzyme catalyses (2R)-2-phosphoglycerate = phosphoenolpyruvate + H2O. It participates in carbohydrate degradation; glycolysis; pyruvate from D-glyceraldehyde 3-phosphate: step 4/5. Catalyzes the reversible conversion of 2-phosphoglycerate (2-PG) into phosphoenolpyruvate (PEP). It is essential for the degradation of carbohydrates via glycolysis. In Enterococcus faecalis (strain ATCC 700802 / V583), this protein is Enolase.